Reading from the N-terminus, the 49-residue chain is Large ribosomal subunit protein bL33C (49 aa).

The interval 21-49 (KNKRNNPDRVEFKKYCPRDKKSTLHRETK) is disordered. Residues 25–49 (NNPDRVEFKKYCPRDKKSTLHRETK) show a composition bias toward basic and acidic residues.

It belongs to the bacterial ribosomal protein bL33 family.

The chain is Large ribosomal subunit protein bL33C from Bacillus licheniformis (strain ATCC 14580 / DSM 13 / JCM 2505 / CCUG 7422 / NBRC 12200 / NCIMB 9375 / NCTC 10341 / NRRL NRS-1264 / Gibson 46).